Consider the following 460-residue polypeptide: V-type ATP synthase beta chain (460 aa).

Belongs to the ATPase alpha/beta chains family.

Produces ATP from ADP in the presence of a proton gradient across the membrane. The V-type beta chain is a regulatory subunit. The chain is V-type ATP synthase beta chain from Anaeromyxobacter sp. (strain Fw109-5).